The chain runs to 210 residues: Probable GTP-binding protein EngB (210 aa).

Positions 30–204 constitute an EngB-type G domain; sequence QGYEVAFAGR…YRVLADWMEL (175 aa). GTP contacts are provided by residues 38–45, 64–68, 82–85, 149–152, and 182–185; these read GRSNAGKS, GRTQL, DLPG, TKAD, and LFSA. Ser45 and Thr66 together coordinate Mg(2+).

Belongs to the TRAFAC class TrmE-Era-EngA-EngB-Septin-like GTPase superfamily. EngB GTPase family. Mg(2+) serves as cofactor.

Necessary for normal cell division and for the maintenance of normal septation. The polypeptide is Probable GTP-binding protein EngB (Pseudomonas putida (strain ATCC 47054 / DSM 6125 / CFBP 8728 / NCIMB 11950 / KT2440)).